The following is a 158-amino-acid chain: 6,7-dimethyl-8-ribityllumazine synthase (158 aa).

Residues phenylalanine 24, 58 to 60 (AFE), and 82 to 84 (AVI) contribute to the 5-amino-6-(D-ribitylamino)uracil site. 87–88 (GT) lines the (2S)-2-hydroxy-3-oxobutyl phosphate pocket. Residue histidine 90 is the Proton donor of the active site. A 5-amino-6-(D-ribitylamino)uracil-binding site is contributed by phenylalanine 115. Arginine 129 contacts (2S)-2-hydroxy-3-oxobutyl phosphate.

Belongs to the DMRL synthase family. Forms an icosahedral capsid composed of 60 subunits, arranged as a dodecamer of pentamers.

It catalyses the reaction (2S)-2-hydroxy-3-oxobutyl phosphate + 5-amino-6-(D-ribitylamino)uracil = 6,7-dimethyl-8-(1-D-ribityl)lumazine + phosphate + 2 H2O + H(+). The protein operates within cofactor biosynthesis; riboflavin biosynthesis; riboflavin from 2-hydroxy-3-oxobutyl phosphate and 5-amino-6-(D-ribitylamino)uracil: step 1/2. Functionally, catalyzes the formation of 6,7-dimethyl-8-ribityllumazine by condensation of 5-amino-6-(D-ribitylamino)uracil with 3,4-dihydroxy-2-butanone 4-phosphate. This is the penultimate step in the biosynthesis of riboflavin. The sequence is that of 6,7-dimethyl-8-ribityllumazine synthase from Pseudomonas paraeruginosa (strain DSM 24068 / PA7) (Pseudomonas aeruginosa (strain PA7)).